Reading from the N-terminus, the 563-residue chain is Chaperonin GroEL 1 (563 aa).

ATP contacts are provided by residues 29–32 (TIGP), 86–90 (DGTTT), glycine 413, 476–478 (NAA), and aspartate 492. The interval 520–545 (DKPEPPSPAGGEGGGDPMGGMGGMGG) is disordered. The segment covering 529 to 545 (GGEGGGDPMGGMGGMGG) has biased composition (gly residues).

It belongs to the chaperonin (HSP60) family. As to quaternary structure, forms a cylinder of 14 subunits composed of two heptameric rings stacked back-to-back. Interacts with the co-chaperonin GroES.

The protein resides in the cytoplasm. It carries out the reaction ATP + H2O + a folded polypeptide = ADP + phosphate + an unfolded polypeptide.. Functionally, together with its co-chaperonin GroES, plays an essential role in assisting protein folding. The GroEL-GroES system forms a nano-cage that allows encapsulation of the non-native substrate proteins and provides a physical environment optimized to promote and accelerate protein folding. The protein is Chaperonin GroEL 1 of Prochlorococcus marinus (strain SARG / CCMP1375 / SS120).